A 424-amino-acid chain; its full sequence is Envelope glycoprotein M (424 aa).

Residues 1-23 are Intravirion-facing; it reads MASRARMERNYRGLSHIDYVHKK. Residues 24 to 44 form a helical membrane-spanning segment; it reads MWVVQAVCFGIAVLVFFGTLV. Over 45-94 the chain is Virion surface; the sequence is AASINLTEGFPCFFAAVVDYRTVNTTLVHTGLTYPRLGGVVPVLFFQTKA. The helical transmembrane segment at 95 to 115 threads the bilayer; sequence VVFFFYATSIVFVFLVCYITV. Over 116–143 the chain is Intravirion; sequence GAIISSKKHVGAAYMGSGAFVFSLMASP. A helical transmembrane segment spans residues 144-164; that stretch reads LTILLGTVSIWLLQAVVIVLA. Over 165–166 the chain is Virion surface; the sequence is HK. The helical transmembrane segment at 167–187 threads the bilayer; the sequence is LIVLAAAVYLVHFSTITFFYG. Residues 188-226 are Intravirion-facing; the sequence is YFCGRGVDSKVYAEDISSAKDIDGSLHKLIGNVRAMMVN. The chain crosses the membrane as a helical span at residues 227 to 247; sequence LLSIVYSIILIMSSLMFGMLL. Residues 248-261 lie on the Virion surface side of the membrane; the sequence is ANSFTLKFWHVIVT. Residues 262-282 traverse the membrane as a helical segment; that stretch reads VLITTSVLTLIYLLVIEFLIA. Arg283 is a topological domain (intravirion). A helical transmembrane segment spans residues 284–304; that stretch reads YVHIILGAYIGLLIGYGMLWT. Residues 305–327 are Virion surface-facing; the sequence is TTCDYVNRFYYAMGANASNLRIA. The chain crosses the membrane as a helical span at residues 328 to 348; sequence CHSVLAVFTVLILLAMVVRLI. Residues 349–424 lie on the Intravirion side of the membrane; it reads RASLYHRRRS…YSGSESEWDD (76 aa). The interval 382–424 is disordered; that stretch reads SYKQRGSQSEDERALTQSRSAEASDEDTIYDRVYSGSESEWDD.

It belongs to the herpesviridae glycoprotein M family. In terms of assembly, interacts (via N-terminus) with gN (via N-terminus). The gM-gN heterodimer forms the gCII complex.

Its subcellular location is the virion membrane. It localises to the host Golgi apparatus. It is found in the host trans-Golgi network. The protein resides in the host endosome membrane. The protein localises to the host nucleus inner membrane. Its function is as follows. Envelope glycoprotein important for virion assembly and egress. Plays a role in the correct incorporation of gH-gL into virion membrane. Directs the glycoprotein N (gN) to the host trans-Golgi network. The chain is Envelope glycoprotein M from Gallid herpesvirus 2 (strain Chicken/Md5/ATCC VR-987) (GaHV-2).